The following is a 123-amino-acid chain: Ribonuclease P protein component (123 aa).

The protein belongs to the RnpA family. Consists of a catalytic RNA component (M1 or rnpB) and a protein subunit.

The enzyme catalyses Endonucleolytic cleavage of RNA, removing 5'-extranucleotides from tRNA precursor.. Functionally, RNaseP catalyzes the removal of the 5'-leader sequence from pre-tRNA to produce the mature 5'-terminus. It can also cleave other RNA substrates such as 4.5S RNA. The protein component plays an auxiliary but essential role in vivo by binding to the 5'-leader sequence and broadening the substrate specificity of the ribozyme. The protein is Ribonuclease P protein component of Herpetosiphon aurantiacus (strain ATCC 23779 / DSM 785 / 114-95).